The chain runs to 392 residues: Phosphoglycerate kinase (392 aa).

Substrate contacts are provided by residues 21–23, arginine 36, 59–62, arginine 118, and arginine 151; these read DFN and HLGR. Residues lysine 201, glycine 292, glutamate 323, and 349-352 each bind ATP; that span reads GGDS.

The protein belongs to the phosphoglycerate kinase family. As to quaternary structure, monomer.

It is found in the cytoplasm. The catalysed reaction is (2R)-3-phosphoglycerate + ATP = (2R)-3-phospho-glyceroyl phosphate + ADP. It participates in carbohydrate degradation; glycolysis; pyruvate from D-glyceraldehyde 3-phosphate: step 2/5. This chain is Phosphoglycerate kinase, found in Borrelia duttonii (strain Ly).